The sequence spans 539 residues: Eukaryotic translation initiation factor 3 subunit L (539 aa).

Residues 302–514 (TFSSILLYIQ…IHIADTKVSH (213 aa)) enclose the PCI domain.

Belongs to the eIF-3 subunit L family. Component of the eukaryotic translation initiation factor 3 (eIF-3) complex.

It localises to the cytoplasm. Its function is as follows. Component of the eukaryotic translation initiation factor 3 (eIF-3) complex, which is involved in protein synthesis of a specialized repertoire of mRNAs and, together with other initiation factors, stimulates binding of mRNA and methionyl-tRNAi to the 40S ribosome. The eIF-3 complex specifically targets and initiates translation of a subset of mRNAs involved in cell proliferation. The sequence is that of Eukaryotic translation initiation factor 3 subunit L from Anopheles gambiae (African malaria mosquito).